The sequence spans 866 residues: Leucine--tRNA ligase (866 aa).

The 'HIGH' region signature appears at 59–69 (PYPSGDLHMGH). A disordered region spans residues 393–421 (VPVIKTDPQTGEPLLPESAPLESPAETGQ). The span at 404–418 (EPLLPESAPLESPAE) shows a compositional bias: low complexity. The 'KMSKS' region motif lies at 628 to 632 (AMSKS). Residue lysine 631 coordinates ATP.

Belongs to the class-I aminoacyl-tRNA synthetase family.

It is found in the cytoplasm. The catalysed reaction is tRNA(Leu) + L-leucine + ATP = L-leucyl-tRNA(Leu) + AMP + diphosphate. The chain is Leucine--tRNA ligase from Leifsonia xyli subsp. xyli (strain CTCB07).